The chain runs to 64 residues: Large ribosomal subunit protein bL33 (64 aa).

It belongs to the bacterial ribosomal protein bL33 family.

This Crocosphaera subtropica (strain ATCC 51142 / BH68) (Cyanothece sp. (strain ATCC 51142)) protein is Large ribosomal subunit protein bL33.